A 361-amino-acid chain; its full sequence is Probable dual-specificity RNA methyltransferase RlmN (361 aa).

E104 acts as the Proton acceptor in catalysis. One can recognise a Radical SAM core domain in the interval 110 to 343 (HEYGNSVCVT…VTIRREQGHD (234 aa)). A disulfide bridge links C117 with C348. Residues C124, C128, and C131 each contribute to the [4Fe-4S] cluster site. Residues 174 to 175 (GE), S206, 229 to 231 (SLH), and N305 each bind S-adenosyl-L-methionine. Residue C348 is the S-methylcysteine intermediate of the active site.

The protein belongs to the radical SAM superfamily. RlmN family. Requires [4Fe-4S] cluster as cofactor.

Its subcellular location is the cytoplasm. The catalysed reaction is adenosine(2503) in 23S rRNA + 2 reduced [2Fe-2S]-[ferredoxin] + 2 S-adenosyl-L-methionine = 2-methyladenosine(2503) in 23S rRNA + 5'-deoxyadenosine + L-methionine + 2 oxidized [2Fe-2S]-[ferredoxin] + S-adenosyl-L-homocysteine. It catalyses the reaction adenosine(37) in tRNA + 2 reduced [2Fe-2S]-[ferredoxin] + 2 S-adenosyl-L-methionine = 2-methyladenosine(37) in tRNA + 5'-deoxyadenosine + L-methionine + 2 oxidized [2Fe-2S]-[ferredoxin] + S-adenosyl-L-homocysteine. In terms of biological role, specifically methylates position 2 of adenine 2503 in 23S rRNA and position 2 of adenine 37 in tRNAs. The protein is Probable dual-specificity RNA methyltransferase RlmN of Bacillus licheniformis (strain ATCC 14580 / DSM 13 / JCM 2505 / CCUG 7422 / NBRC 12200 / NCIMB 9375 / NCTC 10341 / NRRL NRS-1264 / Gibson 46).